A 247-amino-acid polypeptide reads, in one-letter code: Probable transcriptional regulatory protein LAF_0541 (247 aa).

Residues methionine 1–glycine 22 form a disordered region.

It belongs to the TACO1 family.

Its subcellular location is the cytoplasm. This Limosilactobacillus fermentum (strain NBRC 3956 / LMG 18251) (Lactobacillus fermentum) protein is Probable transcriptional regulatory protein LAF_0541.